Consider the following 215-residue polypeptide: Pyrrolidone-carboxylate peptidase (215 aa).

Catalysis depends on residues glutamate 78, cysteine 141, and histidine 165.

It belongs to the peptidase C15 family. As to quaternary structure, homotetramer.

It is found in the cytoplasm. The enzyme catalyses Release of an N-terminal pyroglutamyl group from a polypeptide, the second amino acid generally not being Pro.. In terms of biological role, removes 5-oxoproline from various penultimate amino acid residues except L-proline. The sequence is that of Pyrrolidone-carboxylate peptidase from Streptococcus pyogenes serotype M18 (strain MGAS8232).